A 575-amino-acid polypeptide reads, in one-letter code: Epsin-1 (575 aa).

The a 1,2-diacyl-sn-glycero-3-phospho-(1D-myo-inositol-4,5-bisphosphate) site is built by K11, R25, N30, R63, and H73. In terms of domain architecture, ENTH spans 12–144 (NIVHNYSEAE…RDEDRLREER (133 aa)). Residues 150 to 186 (TKEKLAQTATASSAAVGSGPPPEAEQAWPQSSGEEEL) are disordered. Positions 157–167 (TATASSAAVGS) are enriched in low complexity. UIM domains lie at 183–202 (EEEL…ADQP), 208–227 (EDDV…HDKE), and 233–252 (GDDL…TGGK). Residues 264–575 (FTTPAPPQAS…PAPNTNPFLL (312 aa)) are disordered. 8 tandem repeats follow at residues 274–276 (DPW), 294–296 (DPW), 306–308 (DPW), 319–321 (DPW), 332–334 (DPW), 349–351 (DPW), 367–369 (DPW), and 377–379 (DPW). Positions 274 to 379 (DPWGGPASVP…APAPAFSDPW (106 aa)) are 8 X 3 AA repeats of D-P-W. 2 stretches are compositionally biased toward low complexity: residues 279–299 (PASV…WGGP) and 306–316 (DPWGGAAPTPA). The segment covering 332-346 (DPWGGTPAPAAGEGP) has biased composition (low complexity). Residues 367–379 (DPWAPAPAFSDPW) are compositionally biased toward low complexity. Position 382 is a phosphoserine (S382). The short motif at 401–410 (DEFSDFDRLR) is the [DE]-X(1,2)-F-X-X-[FL]-X-X-X-R motif element. Residues S418 and S419 each carry the phosphoserine modification. T420 carries the phosphothreonine modification. A phosphoserine mark is found at S434, S446, and S453. The segment covering 453–467 (SPPPAATPTPTPPTR) has biased composition (pro residues). T459, T463, and T469 each carry phosphothreonine. S472 is modified (phosphoserine). T493 carries the post-translational modification Phosphothreonine. Repeat copies occupy residues 501–503 (NPF) and 517–519 (NPF). Residues 501-573 (NPFLPSGAPP…GPPAPNTNPF (73 aa)) form a 3 X 3 AA repeats of N-P-F region. At R533 the chain carries Omega-N-methylarginine. Pro residues predominate over residues 556-569 (GLPPMMPPGPPAPN). The stretch at 571-573 (NPF) is repeat 3.

This sequence belongs to the epsin family. As to quaternary structure, monomer. Binds clathrin and ZBTB16/ZNF145. Binds ubiquitinated proteins. Interacts with RALBP1 in a complex also containing NUMB and TFAP2A during interphase and mitosis. Interacts with AP2B1. Interacts with UBQLN2. Interacts with ITSN1. Interacts with AP2A1 and AP2A2. Interacts with REPS2; the interaction is direct. Interacts with EPS15; the interaction is direct. Interacts with ENTREP1. Post-translationally, phosphorylated on serine and/or threonine residues in mitotic cells. Phosphorylation reduces interaction with REPS2, AP-2 and the membrane fraction. Depolarization of synaptosomes results in dephosphorylation. In terms of processing, ubiquitinated.

Its subcellular location is the cytoplasm. It is found in the cell membrane. The protein localises to the nucleus. It localises to the membrane. The protein resides in the clathrin-coated pit. Its function is as follows. Binds to membranes enriched in phosphatidylinositol 4,5-bisphosphate (PtdIns(4,5)P2). Modifies membrane curvature and facilitates the formation of clathrin-coated invaginations. Regulates receptor-mediated endocytosis. In Mus musculus (Mouse), this protein is Epsin-1 (Epn1).